The chain runs to 88 residues: Long neurotoxin 31 (88 aa).

The first 21 residues, 1-21, serve as a signal peptide directing secretion; sequence MKTLLLTLVVVTIVCLDLGNS. Disulfide bonds link cysteine 24–cysteine 42, cysteine 35–cysteine 63, cysteine 48–cysteine 52, cysteine 67–cysteine 78, and cysteine 79–cysteine 84.

This sequence belongs to the three-finger toxin family. Long-chain subfamily. Type II alpha-neurotoxin sub-subfamily. Expressed by the venom gland.

It localises to the secreted. In terms of biological role, binds with high affinity to muscular (alpha-1/CHRNA1) and neuronal (alpha-7/CHRNA7) nicotinic acetylcholine receptor (nAChR) and inhibits acetylcholine from binding to the receptor, thereby impairing neuromuscular and neuronal transmission. The protein is Long neurotoxin 31 of Drysdalia coronoides (White-lipped snake).